A 91-amino-acid chain; its full sequence is Probable Fe(2+)-trafficking protein (91 aa).

The protein belongs to the Fe(2+)-trafficking protein family.

Functionally, could be a mediator in iron transactions between iron acquisition and iron-requiring processes, such as synthesis and/or repair of Fe-S clusters in biosynthetic enzymes. The polypeptide is Probable Fe(2+)-trafficking protein (Paraburkholderia phytofirmans (strain DSM 17436 / LMG 22146 / PsJN) (Burkholderia phytofirmans)).